A 500-amino-acid polypeptide reads, in one-letter code: Cytochrome P450 11B1, mitochondrial (500 aa).

A mitochondrion-targeting transit peptide spans 1–24; it reads MAFRLKSDVRLAGSWLCLRGARAL. Cys-447 is a heme binding site.

This sequence belongs to the cytochrome P450 family. The cofactor is heme.

The protein localises to the mitochondrion inner membrane. The enzyme catalyses a steroid + 2 reduced [adrenodoxin] + O2 + 2 H(+) = an 11beta-hydroxysteroid + 2 oxidized [adrenodoxin] + H2O. It catalyses the reaction 11-deoxycortisol + 2 reduced [adrenodoxin] + O2 + 2 H(+) = cortisol + 2 oxidized [adrenodoxin] + H2O. The catalysed reaction is 21-hydroxyprogesterone + 2 reduced [adrenodoxin] + O2 + 2 H(+) = corticosterone + 2 oxidized [adrenodoxin] + H2O. It carries out the reaction 21-hydroxyprogesterone + 2 reduced [adrenodoxin] + O2 + 2 H(+) = 18-hydroxy-11-deoxycorticosterone + 2 oxidized [adrenodoxin] + H2O. The enzyme catalyses 21-hydroxyprogesterone + 2 reduced [adrenodoxin] + O2 + 2 H(+) = 19-hydroxy-11-deoxycorticosterone + 2 oxidized [adrenodoxin] + H2O. It catalyses the reaction cortisol + 2 reduced [adrenodoxin] + O2 + 2 H(+) = 18-hydroxycortisol + 2 oxidized [adrenodoxin] + H2O. The catalysed reaction is 11-deoxycortisol + 2 reduced [adrenodoxin] + O2 + 2 H(+) = 18-hydroxy-11-deoxycortisol + 2 oxidized [adrenodoxin] + H2O. It functions in the pathway steroid biosynthesis; glucocorticoid biosynthesis. It participates in steroid hormone biosynthesis. In terms of biological role, a cytochrome P450 monooxygenase involved in the biosynthesis of adrenal corticoids. Catalyzes a variety of reactions that are essential for many species, including detoxification, defense, and the formation of endogenous chemicals like steroid hormones. Steroid 11beta, 18- and 19-hydroxylase with preferred regioselectivity at 11beta, then 18, and lastly 19. Catalyzes the hydroxylation of 11-deoxycortisol and 11-deoxycorticosterone (21-hydroxyprogesterone) at 11beta position, yielding cortisol or corticosterone, respectively, but cannot produce aldosterone. Mechanistically, uses molecular oxygen inserting one oxygen atom into a substrate for hydroxylation and reducing the second into a water molecule. Two electrons are provided by NADPH via a two-protein mitochondrial transfer system comprising flavoprotein FDXR (adrenodoxin/ferredoxin reductase) and nonheme iron-sulfur protein FDX1 or FDX2 (adrenodoxin/ferredoxin). Due to its lack of 18-oxidation activity, it is incapable of generating aldosterone. Could also be involved in the androgen metabolic pathway. The protein is Cytochrome P450 11B1, mitochondrial (CYP11B1) of Cavia porcellus (Guinea pig).